An 89-amino-acid chain; its full sequence is Large ribosomal subunit protein bL27 (89 aa).

Residues 1 to 26 (MATKKAGGSSKNGRDSAGRRLGLKKT) are disordered.

This sequence belongs to the bacterial ribosomal protein bL27 family.

The protein is Large ribosomal subunit protein bL27 of Orientia tsutsugamushi (strain Boryong) (Rickettsia tsutsugamushi).